The chain runs to 361 residues: Probable purine permease 13 (361 aa).

The next 10 membrane-spanning stretches (helical) occupy residues 35 to 55 (WILV…AVLL), 68 to 88 (WIST…LCFL), 103 to 123 (LVWI…LYSF), 129 to 151 (SAST…SYYI), 156 to 176 (ITCL…LVSL), 192 to 212 (LIGC…LSLM), 238 to 258 (VASC…LLSV), 268 to 288 (VIYV…SVGA), 289 to 309 (VALI…LSLI), and 323 to 343 (LTEV…FYIY).

It belongs to the purine permeases (TC 2.A.7.14) family.

Its subcellular location is the membrane. The sequence is that of Probable purine permease 13 (PUP13) from Arabidopsis thaliana (Mouse-ear cress).